Reading from the N-terminus, the 208-residue chain is MAKNYYDITLALAGICQSARLVQQLAHEGQCDNDALNTVLSGLLQTNPPSTLAVYGGNEQSLKMGLETLQSVLNANRQGPAAELTRYTLSLMVLERKLNANKSAMNTLGDRISQLDRQLAHFDLESETMMSSLAAIYTDVISPLGPRIQVIGSPAILQSTLVQAKIRATLLAGIRSAVLWQQVGGSRLQLMFSRNRLFKQAQSILAHI.

The protein belongs to the HflD family.

The protein resides in the cytoplasm. The protein localises to the cell inner membrane. The sequence is that of High frequency lysogenization protein HflD homolog from Yersinia enterocolitica serotype O:8 / biotype 1B (strain NCTC 13174 / 8081).